The chain runs to 355 residues: NAD-dependent protein deacylase sirtuin-6 (355 aa).

S2 is modified (N-acetylserine). Phosphoserine is present on S10. One can recognise a Deacetylase sirtuin-type domain in the interval 27 to 272; the sequence is PEELERKVWE…TRLMKHLGLE (246 aa). An N6-acetyllysine modification is found at K33. Residues A53, T57, F64, R65, W71, Q113, and H133 each coordinate NAD(+). H133 functions as the Proton acceptor in the catalytic mechanism. The Zn(2+) site is built by C141, C144, and C166. A Glycyl lysine isopeptide (Lys-Gly) (interchain with G-Cter in ubiquitin) cross-link involves residue K170. C177 provides a ligand contact to Zn(2+). NAD(+) contacts are provided by G214, S216, N240, Q242, and V258. The disordered stretch occupies residues 284–355; sequence RALPPLPRPP…KRVKAEAVPS (72 aa). Residues 287–296 are compositionally biased toward pro residues; that stretch reads PPLPRPPTPK. Residue T294 is modified to Phosphothreonine. A phosphoserine mark is found at S303 and S330.

It belongs to the sirtuin family. Class IV subfamily. In terms of assembly, homodimer; binds to nucleosomes and DNA ends as a homodimer. Interacts with RELA; interferes with RELA binding to target DNA. Interacts with SMARCA5; promoting recruitment of SMARCA5/SNF2H to double-strand breaks (DSBs) sites. Interacts with the mTORC2 complex; preventing the ability of SIRT6 to deacetylate FOXO1. Interacts with the CLOCK-BMAL1 complex; recruited by the CLOCK-BMAL1 complex to regulate expression of clock-controlled genes. Interacts with CSNK2A2; preventing CSNK2A2 localization to the nucleus. Acetylated at Lys-33. Deacetylation at Lys-33 by SIRT1 promotes homomultimerization and binding to double-strand breaks (DSBs) sites. In terms of processing, phosphorylation at Ser-10 by MAPK8/JNK1 in response to oxidative stress stimulates the mono-ADP-ribosyltransferase activity on PARP1, leading to PARP1 recruitment to double-strand breaks (DSBs). Post-translationally, monoubiquitinated at Lys-170 by STUB1/CHIP, preventing its degradation by the proteasome. Sumoylated, leading to specifically decrease ability to deacetylate histone H3 at 'Lys-56' (H3K56ac).

The protein localises to the nucleus. The protein resides in the chromosome. Its subcellular location is the telomere. It is found in the endoplasmic reticulum. It carries out the reaction N(6)-acetyl-L-lysyl-[protein] + NAD(+) + H2O = 2''-O-acetyl-ADP-D-ribose + nicotinamide + L-lysyl-[protein]. The enzyme catalyses N(6)-tetradecanoyl-L-lysyl-[protein] + NAD(+) + H2O = 2''-O-tetradecanoyl-ADP-D-ribose + nicotinamide + L-lysyl-[protein]. The catalysed reaction is N(6)-hexadecanoyl-L-lysyl-[protein] + NAD(+) + H2O = 2''-O-hexadecanoyl-ADP-D-ribose + nicotinamide + L-lysyl-[protein]. It catalyses the reaction L-lysyl-[protein] + NAD(+) = N(6)-(ADP-D-ribosyl)-L-lysyl-[protein] + nicotinamide + H(+). It carries out the reaction L-arginyl-[protein] + NAD(+) = N(omega)-(ADP-D-ribosyl)-L-arginyl-[protein] + nicotinamide + H(+). Its activity is regulated as follows. Compared to the defatty-acylase activity, the protein deacetylase activity is weak in vitro, and requires activation. The histone deacetylase activity is strongly activated upon binding to nucleosomes and chromatin in vivo. Two molecules of SIRT6 associate with the acidic patch of one nucleosome, while the C-terminal disordered region of SIRT6 associates with nucleosomal DNA, leading to efficient histone deacetylation. The protein-lysine deacetylase activity is also activated by long-chain free fatty-acids. Functionally, NAD-dependent protein deacetylase, deacylase and mono-ADP-ribosyltransferase that plays an essential role in DNA damage repair, telomere maintenance, metabolic homeostasis, inflammation, tumorigenesis and aging. Displays protein-lysine deacetylase or defatty-acylase (demyristoylase and depalmitoylase) activity, depending on the context. Acts as a key histone deacetylase by catalyzing deacetylation of histone H3 at 'Lys-9', 'Lys-18' and 'Lys-56' (H3K9ac, H3K18ac and H3K56ac, respectively), suppressing target gene expression of several transcription factors, including NF-kappa-B. Acts as an inhibitor of transcription elongation by mediating deacetylation of H3K9ac and H3K56ac, preventing release of NELFE from chromatin and causing transcriptional pausing. Involved in DNA repair by promoting double-strand break (DSB) repair: acts as a DSB sensor by recognizing and binding DSB sites, leading to (1) recruitment of DNA repair proteins, such as SMARCA5/SNF2H, and (2) deacetylation of histone H3K9ac and H3K56ac. SIRT6 participation to DSB repair is probably involved in extension of life span. Also promotes DNA repair by deacetylating non-histone proteins, such as DDB2 and p53/TP53. Specifically deacetylates H3K18ac at pericentric heterochromatin, thereby maintaining pericentric heterochromatin silencing at centromeres and protecting against genomic instability and cellular senescence. Involved in telomere maintenance by catalyzing deacetylation of histone H3 in telomeric chromatin, regulating telomere position effect and telomere movement in response to DNA damage. Required for embryonic stem cell differentiation by mediating histone deacetylation of H3K9ac. Plays a major role in metabolism by regulating processes such as glycolysis, gluconeogenesis, insulin secretion and lipid metabolism. Inhibits glycolysis via histone deacetylase activity and by acting as a corepressor of the transcription factor HIF1A, thereby controlling the expression of multiple glycolytic genes. Has tumor suppressor activity by repressing glycolysis, thereby inhibiting the Warburg effect. Also regulates glycolysis and tumorigenesis by mediating deacetylation and nuclear export of non-histone proteins, such as isoform M2 of PKM (PKM2). Acts as a negative regulator of gluconeogenesis by mediating deacetylation of non-histone proteins, such as FOXO1 and KAT2A/GCN5. Promotes beta-oxidation of fatty acids during fasting by catalyzing deacetylation of NCOA2, inducing coactivation of PPARA. Acts as a regulator of lipid catabolism in brown adipocytes, both by catalyzing deacetylation of histones and non-histone proteins, such as FOXO1. Also acts as a regulator of circadian rhythms, both by regulating expression of clock-controlled genes involved in lipid and carbohydrate metabolism, and by catalyzing deacetylation of PER2. The defatty-acylase activity is specifically involved in regulation of protein secretion. Has high activity toward long-chain fatty acyl groups and mediates protein-lysine demyristoylation and depalmitoylation of target proteins, such as RRAS2 and TNF, thereby regulating their secretion. Also acts as a mono-ADP-ribosyltransferase by mediating mono-ADP-ribosylation of PARP1, TRIM28/KAP1 or SMARCC2/BAF170. Mono-ADP-ribosyltransferase activity is involved in DNA repair, cellular senescence, repression of LINE-1 retrotransposon elements and regulation of transcription. In Macaca fascicularis (Crab-eating macaque), this protein is NAD-dependent protein deacylase sirtuin-6.